A 102-amino-acid chain; its full sequence is uncharacterized protein (102 aa).

The next 2 helical transmembrane spans lie at 38 to 58 (FYVW…QLIL) and 64 to 84 (VLFL…LFQF).

The protein resides in the membrane. This is an uncharacterized protein from Saccharomyces cerevisiae (strain ATCC 204508 / S288c) (Baker's yeast).